Here is a 369-residue protein sequence, read N- to C-terminus: MSNSIVGEVYHHVILDVIANSRSDFEENGVDDATLRELQNLWQSKLVATDVATFPWAQAPVGTFPIGQLFDPVSGLRTDSLDVTAPAVANSPILNNIAAIRAVQQMDTFAQQHGNSNYYSPPTPSLPQSATNISFDSSAIPNVQSNPNNTAPFPSYSSNSLQLPTNQTADSPIINDHSTANVTSTGQEHAPDSSSTNSFGGLLLPNQNSPKKSELGETESSNTTPANSRNDVPQTDGAIHDLDDAGSPSNFESNRFAIAQKADAEIYEVLKKNRILQIDGTIEDNEDEKKPPVDTPSDEAINSDLDDPDSDEAPETEEGSDIGQAIVLCLYDKVNHHKNKWKCVFRDGVVGVNGKDYLFFKANGEFEWI.

Composition is skewed to polar residues over residues 113–210 (HGNS…QNSP) and 218–233 (TESSNTTPANSRNDVP). A disordered region spans residues 113–248 (HGNSNYYSPP…IHDLDDAGSP (136 aa)). Ser249 is modified (phosphoserine). The disordered stretch occupies residues 282–319 (IEDNEDEKKPPVDTPSDEAINSDLDDPDSDEAPETEEG). Residues 304–319 (DLDDPDSDEAPETEEG) are compositionally biased toward acidic residues.

It belongs to the TFIIA subunit 1 family. TFIIA is a heterodimer of the large subunit and the small subunit gamma.

The protein resides in the nucleus. In terms of biological role, TFIIA is a component of the transcription machinery of RNA polymerase II and plays an important role in transcriptional activation. TFIIA in a complex with tbp mediates transcriptional activity. This chain is Transcription initiation factor IIA large subunit, found in Schizosaccharomyces pombe (strain 972 / ATCC 24843) (Fission yeast).